A 291-amino-acid polypeptide reads, in one-letter code: START domain-containing protein 10 (291 aa).

Position 1 is an N-acetylmethionine (Met-1). A disordered region spans residues 1 to 20 (MEKLAASTEPQGPRPVLGRE). The START domain maps to 14-224 (RPVLGRESVQ…MYKACLKYPE (211 aa)). N6-succinyllysine is present on residues Lys-94, Lys-197, and Lys-202. 2 positions are modified to phosphoserine: Ser-253 and Ser-259. The segment at 260–291 (LENIDESAVAESREERMGGAGGEGSDDDTSLT) is disordered. The residue at position 284 (Ser-284) is a Phosphoserine; by CK2. Position 289 is a phosphoserine (Ser-289).

Post-translationally, phosphorylation at Ser-284 by CK2 negatively regulates lipid transfer activity, possibly by decreasing membrane association.

It is found in the cell projection. Its subcellular location is the cilium. It localises to the flagellum. The protein resides in the cytoplasm. The protein localises to the membrane. Its function is as follows. May play metabolic roles in sperm maturation or fertilization. Phospholipid transfer protein that preferentially selects lipid species containing a palmitoyl or stearoyl chain on the sn-1 and an unsaturated fatty acyl chain (18:1 or 18:2) on the sn-2 position. Able to transfer phosphatidylcholine (PC) and phosphatidyetanolamline (PE) between membranes. The protein is START domain-containing protein 10 (STARD10) of Homo sapiens (Human).